Consider the following 231-residue polypeptide: Lipoprotein-releasing system ATP-binding protein LolD (231 aa).

The ABC transporter domain maps to 11–231; it reads LRLEGLTRRF…TLRDGKLVPF (221 aa). An ATP-binding site is contributed by 47 to 54; it reads APSGTGKS.

This sequence belongs to the ABC transporter superfamily. Lipoprotein translocase (TC 3.A.1.125) family. As to quaternary structure, the complex is composed of two ATP-binding proteins (LolD) and two transmembrane proteins (LolC and LolE).

The protein resides in the cell inner membrane. Its function is as follows. Part of the ABC transporter complex LolCDE involved in the translocation of mature outer membrane-directed lipoproteins, from the inner membrane to the periplasmic chaperone, LolA. Responsible for the formation of the LolA-lipoprotein complex in an ATP-dependent manner. In Gluconobacter oxydans (strain 621H) (Gluconobacter suboxydans), this protein is Lipoprotein-releasing system ATP-binding protein LolD.